An 84-amino-acid polypeptide reads, in one-letter code: uncharacterized protein (84 aa).

Residues 1 to 14 (MQKLNKSSSKGKNN) show a composition bias toward low complexity. Residues 1 to 84 (MQKLNKSSSK…VDKGERKESE (84 aa)) are disordered. Gly residues predominate over residues 28–40 (STYGFGPYGGGGF). Basic and acidic residues-rich tracts occupy residues 53–65 (DTKKLKGEVEEGT) and 73–84 (KLVDKGERKESE).

This is an uncharacterized protein from Schizosaccharomyces pombe (strain 972 / ATCC 24843) (Fission yeast).